A 170-amino-acid polypeptide reads, in one-letter code: Ubiquitin-conjugating enzyme E2 G1 (170 aa).

The residue at position 1 (methionine 1) is an N-acetylmethionine. Threonine 2 carries the post-translational modification N-acetylthreonine; in Ubiquitin-conjugating enzyme E2 G1, N-terminally processed. Residues 5 to 166 form the UBC core domain; the sequence is QSALLLRRQL…VARCVRKSQE (162 aa). Cysteine 90 acts as the Glycyl thioester intermediate in catalysis.

This sequence belongs to the ubiquitin-conjugating enzyme family. Post-translationally, autoubiquitinated.

The enzyme catalyses S-ubiquitinyl-[E1 ubiquitin-activating enzyme]-L-cysteine + [E2 ubiquitin-conjugating enzyme]-L-cysteine = [E1 ubiquitin-activating enzyme]-L-cysteine + S-ubiquitinyl-[E2 ubiquitin-conjugating enzyme]-L-cysteine.. It functions in the pathway protein modification; protein ubiquitination. In terms of biological role, accepts ubiquitin from the E1 complex and catalyzes its covalent attachment to other proteins. In vitro catalyzes 'Lys-48'-, as well as 'Lys-63'-linked polyubiquitination. May be involved in degradation of muscle-specific proteins. Mediates polyubiquitination of CYP3A4. This is Ubiquitin-conjugating enzyme E2 G1 (UBE2G1) from Macaca fascicularis (Crab-eating macaque).